The chain runs to 205 residues: Holliday junction branch migration complex subunit RuvA (205 aa).

The segment at 1-64 (MIGRLRGIIL…EDAQLLFGFN (64 aa)) is domain I. The interval 65-143 (DKQERALFRE…GLSGDLFNSV (79 aa)) is domain II. Residues 144 to 156 (SDIPLTSPANVDN) are flexible linker. Positions 157-205 (RVGEPEAEAAAALVALGYKPQEASRMISKIARPDADCETLIRDALRAAL) are domain III.

The protein belongs to the RuvA family. As to quaternary structure, homotetramer. Forms an RuvA(8)-RuvB(12)-Holliday junction (HJ) complex. HJ DNA is sandwiched between 2 RuvA tetramers; dsDNA enters through RuvA and exits via RuvB. An RuvB hexamer assembles on each DNA strand where it exits the tetramer. Each RuvB hexamer is contacted by two RuvA subunits (via domain III) on 2 adjacent RuvB subunits; this complex drives branch migration. In the full resolvosome a probable DNA-RuvA(4)-RuvB(12)-RuvC(2) complex forms which resolves the HJ.

It localises to the cytoplasm. The RuvA-RuvB-RuvC complex processes Holliday junction (HJ) DNA during genetic recombination and DNA repair, while the RuvA-RuvB complex plays an important role in the rescue of blocked DNA replication forks via replication fork reversal (RFR). RuvA specifically binds to HJ cruciform DNA, conferring on it an open structure. The RuvB hexamer acts as an ATP-dependent pump, pulling dsDNA into and through the RuvAB complex. HJ branch migration allows RuvC to scan DNA until it finds its consensus sequence, where it cleaves and resolves the cruciform DNA. This Pectobacterium atrosepticum (strain SCRI 1043 / ATCC BAA-672) (Erwinia carotovora subsp. atroseptica) protein is Holliday junction branch migration complex subunit RuvA.